We begin with the raw amino-acid sequence, 139 residues long: MGREKKQEYALFTAWGASFIATLGSLYFSEIMKFEPCVLCWYQRIFMYPFVLWLGIAVVKKDYRIANYSLPIASIGACISLYHYAIQKIAAFSAAGAACGRVPCTGEYINWFGFVTIPFLALIGFITIAVCSFIVIKNK.

A helical membrane pass occupies residues 8 to 27 (EYALFTAWGASFIATLGSLY). A disulfide bridge connects residues C37 and C40. Transmembrane regions (helical) follow at residues 42 to 61 (YQRI…VVKK) and 68 to 85 (YSLP…YHYA). C99 and C104 are disulfide-bonded. Residues 113-135 (GFVTIPFLALIGFITIAVCSFIV) form a helical membrane-spanning segment.

It belongs to the DsbB family. BdbC subfamily.

The protein resides in the cell membrane. In terms of biological role, required for disulfide bond formation in some proteins. This chain is Probable disulfide formation protein C 1 (bdbC1), found in Bacillus cereus (strain ATCC 10987 / NRS 248).